Reading from the N-terminus, the 135-residue chain is Transcription antitermination protein NusB (135 aa).

Belongs to the NusB family.

Its function is as follows. Involved in transcription antitermination. Required for transcription of ribosomal RNA (rRNA) genes. Binds specifically to the boxA antiterminator sequence of the ribosomal RNA (rrn) operons. In Nocardioides sp. (strain ATCC BAA-499 / JS614), this protein is Transcription antitermination protein NusB.